The primary structure comprises 172 residues: Shikimate kinase (172 aa).

ATP is bound at residue 11–16 (GTGKTA). Position 15 (T15) interacts with Mg(2+). The substrate site is built by D33, R57, and G79. R117 is a binding site for ATP. R136 contacts substrate.

This sequence belongs to the shikimate kinase family. As to quaternary structure, monomer. The cofactor is Mg(2+).

The protein localises to the cytoplasm. It catalyses the reaction shikimate + ATP = 3-phosphoshikimate + ADP + H(+). Its pathway is metabolic intermediate biosynthesis; chorismate biosynthesis; chorismate from D-erythrose 4-phosphate and phosphoenolpyruvate: step 5/7. Catalyzes the specific phosphorylation of the 3-hydroxyl group of shikimic acid using ATP as a cosubstrate. This chain is Shikimate kinase, found in Pelotomaculum thermopropionicum (strain DSM 13744 / JCM 10971 / SI).